Here is a 383-residue protein sequence, read N- to C-terminus: Protein KES1 (383 aa).

Basic and acidic residues predominate over residues 317–339 (FETASKDKARIENAQRQKRKDEA). A disordered region spans residues 317-346 (FETASKDKARIENAQRQKRKDEAAAGTPHQ).

It belongs to the OSBP family.

In terms of biological role, lipid transporter involved in lipid countertransport between the Golgi complex and membranes of the endoplasmic reticulum: specifically exchanges sterol with phosphatidylinositol 4-phosphate (PI4P), delivering sterol to the Golgi in exchange for PI4P, which is degraded by the SAC1 phosphatase in the endoplasmic reticulum. The protein is Protein KES1 (KES1) of Mycosarcoma maydis (Corn smut fungus).